We begin with the raw amino-acid sequence, 111 residues long: U-scoloptoxin(16)-Er8a (111 aa).

Residues 1–26 (MTSTRKLSVSCLIVFMVSSLIAVSSG) form the signal peptide.

Belongs to the scoloptoxin-16 family. Contains 4 disulfide bonds. As to expression, expressed by the venom gland.

The protein resides in the secreted. The protein is U-scoloptoxin(16)-Er8a of Ethmostigmus rubripes (Giant centipede).